A 127-amino-acid polypeptide reads, in one-letter code: Alkaline proteinase inhibitor (127 aa).

A signal peptide spans 1–26 (MNINYFVRIVPVAVVLLVGISGASMA). A disulfide bond links Cys-53 and Cys-70.

Belongs to the protease inhibitor I38 family.

Its subcellular location is the periplasm. Its function is as follows. Inhibitor of the alkaline protease. This Pseudomonas syringae pv. tomato (strain ATCC BAA-871 / DC3000) protein is Alkaline proteinase inhibitor (inh).